Consider the following 344-residue polypeptide: Ferrochelatase (344 aa).

Fe cation contacts are provided by H190 and E270.

It belongs to the ferrochelatase family.

The protein resides in the cytoplasm. It catalyses the reaction heme b + 2 H(+) = protoporphyrin IX + Fe(2+). Its pathway is porphyrin-containing compound metabolism; protoheme biosynthesis; protoheme from protoporphyrin-IX: step 1/1. In terms of biological role, catalyzes the ferrous insertion into protoporphyrin IX. The polypeptide is Ferrochelatase (Rickettsia felis (strain ATCC VR-1525 / URRWXCal2) (Rickettsia azadi)).